Here is a 219-residue protein sequence, read N- to C-terminus: Casein kinase II subunit beta' (219 aa).

At threonine 2 the chain carries Phosphothreonine; by autocatalysis.

This sequence belongs to the casein kinase 2 subunit beta family. In terms of assembly, tetramer of two alpha and two beta' subunits. Phosphorylated by alpha subunit.

Its function is as follows. Participates in Wnt signaling. Plays a complex role in regulating the basal catalytic activity of the alpha subunit. This chain is Casein kinase II subunit beta' (CkIIbeta2), found in Drosophila melanogaster (Fruit fly).